Reading from the N-terminus, the 135-residue chain is Large ribosomal subunit protein uL16c (135 aa).

The protein belongs to the universal ribosomal protein uL16 family. As to quaternary structure, part of the 50S ribosomal subunit.

It is found in the plastid. The protein resides in the chloroplast. The polypeptide is Large ribosomal subunit protein uL16c (Gossypium hirsutum (Upland cotton)).